A 351-amino-acid polypeptide reads, in one-letter code: MIGYVLNGEHEEIPYGELMALLEIFNYNGSVERLKRYVITEDSPAKDIVKRSGYIDEGHRIIFRYNLEEKSVDLVDKIVNDFINSFKDFVANIDYPDIDESKSYAVRVLKLHKDEFTKSIDSLRIEKEIGGIIKLKTNAKVNLTKPDILVRVVILENTFFISNVLEMRDREYFQKNRPHLRKYFHPGCMLPKLARAMVNLARVKEGDIVLDPFCGTGGFLIEAGLIGAKLIGCDIDWRMASGTLINLEEYNLLDKVIKVKRLDAKYVKEFLNELNIEKVDAIVTDPPYGISTAKKGEIEKILETLPEVIKDNGYFVFAYPKKIELDMELEGLYKVYIHKGLIRHIHVYKKI.

One can recognise a THUMP domain in the interval 57 to 165; sequence EGHRIIFRYN…ENTFFISNVL (109 aa).

Belongs to the methyltransferase superfamily. Trm-G10 family. As to quaternary structure, monomer.

It is found in the cytoplasm. The enzyme catalyses guanosine(10) in tRNA + 2 S-adenosyl-L-methionine = N(2)-dimethylguanosine(10) in tRNA + 2 S-adenosyl-L-homocysteine + 2 H(+). In terms of biological role, catalyzes the adenosylmethionine-dependent methylation of the exocyclic amino group (N(2)) of guanosine at position 10 of various tRNAs. Acts via a two-step process that leads to the formation of either N(2)-monomethyl (m(2)G) or N(2)-dimethylguanosine (m(2)(2)G). This Methanocaldococcus jannaschii (strain ATCC 43067 / DSM 2661 / JAL-1 / JCM 10045 / NBRC 100440) (Methanococcus jannaschii) protein is tRNA (guanine(10)-N2)-dimethyltransferase (trmG10).